Reading from the N-terminus, the 179-residue chain is Peptidyl-tRNA hydrolase (179 aa).

Tyr15 contributes to the tRNA binding site. His20 acts as the Proton acceptor in catalysis. Residues Tyr66, Asn68, and Asn114 each contribute to the tRNA site.

It belongs to the PTH family. In terms of assembly, monomer.

The protein resides in the cytoplasm. The catalysed reaction is an N-acyl-L-alpha-aminoacyl-tRNA + H2O = an N-acyl-L-amino acid + a tRNA + H(+). Hydrolyzes ribosome-free peptidyl-tRNAs (with 1 or more amino acids incorporated), which drop off the ribosome during protein synthesis, or as a result of ribosome stalling. Its function is as follows. Catalyzes the release of premature peptidyl moieties from peptidyl-tRNA molecules trapped in stalled 50S ribosomal subunits, and thus maintains levels of free tRNAs and 50S ribosomes. The polypeptide is Peptidyl-tRNA hydrolase (Chlamydia trachomatis serovar L2 (strain ATCC VR-902B / DSM 19102 / 434/Bu)).